The sequence spans 336 residues: IgLON family member 5 (336 aa).

The first 30 residues, 1–30 (MPPPAPGARLRLLAAAALAGLAVISRGLLS), serve as a signal peptide directing secretion. Ig-like C2-type domains are found at residues 33-122 (LEFS…QPYT), 132-213 (PARI…VLVT), and 218-307 (PTIT…MRLL). Residues asparagine 41, asparagine 49, asparagine 67, and asparagine 137 are each glycosylated (N-linked (GlcNAc...) asparagine). Cysteine 54 and cysteine 112 are disulfide-bonded. 2 disulfides stabilise this stretch: cysteine 154/cysteine 195 and cysteine 238/cysteine 291. N-linked (GlcNAc...) asparagine glycosylation is present at asparagine 288.

The protein belongs to the immunoglobulin superfamily. IgLON family.

Its subcellular location is the secreted. The chain is IgLON family member 5 (Iglon5) from Mus musculus (Mouse).